Here is a 160-residue protein sequence, read N- to C-terminus: SsrA-binding protein (160 aa).

It belongs to the SmpB family.

It localises to the cytoplasm. Its function is as follows. Required for rescue of stalled ribosomes mediated by trans-translation. Binds to transfer-messenger RNA (tmRNA), required for stable association of tmRNA with ribosomes. tmRNA and SmpB together mimic tRNA shape, replacing the anticodon stem-loop with SmpB. tmRNA is encoded by the ssrA gene; the 2 termini fold to resemble tRNA(Ala) and it encodes a 'tag peptide', a short internal open reading frame. During trans-translation Ala-aminoacylated tmRNA acts like a tRNA, entering the A-site of stalled ribosomes, displacing the stalled mRNA. The ribosome then switches to translate the ORF on the tmRNA; the nascent peptide is terminated with the 'tag peptide' encoded by the tmRNA and targeted for degradation. The ribosome is freed to recommence translation, which seems to be the essential function of trans-translation. The chain is SsrA-binding protein from Salmonella arizonae (strain ATCC BAA-731 / CDC346-86 / RSK2980).